The chain runs to 548 residues: Mannosyltransferase APTG1 (548 aa).

The tract at residues M1–N23 is disordered. A run of 3 helical transmembrane segments spans residues I41–N61, L98–I118, and G146–L166. N167 carries an N-linked (GlcNAc...) asparagine glycan. The next 7 helical transmembrane spans lie at T169 to I189, L204 to V224, F238 to D258, L260 to S280, F294 to I314, K320 to F340, and F342 to E362. A glycan (N-linked (GlcNAc...) asparagine) is linked at N382. A helical transmembrane segment spans residues L392 to H412. Residue N490 is glycosylated (N-linked (GlcNAc...) asparagine).

Belongs to the glycosyltransferase 22 family. In terms of tissue distribution, mostly expressed, mainly in vascular tissues, in leaves, roots, stems, flowers, siliques and pollen, and, to a lower extent, in seedlings.

It localises to the endoplasmic reticulum membrane. In terms of biological role, mannosyltransferase involved in glycosylphosphatidylinositol-anchor biosynthesis. Required for the pollen tube micropylar guidance and embryo development by regulating GPI-anchor mediated protein localization (e.g. COBL10 and A36). This Arabidopsis thaliana (Mouse-ear cress) protein is Mannosyltransferase APTG1.